A 938-amino-acid polypeptide reads, in one-letter code: Protein translocase subunit SecA 1 (938 aa).

Residues Gln84, 102–106 (GEGKT), and Asp491 each bind ATP. The interval 865 to 938 (QTGGVATKER…QKTGRHAKRR (74 aa)) is disordered. Basic and acidic residues predominate over residues 918 to 927 (TRKERREAAR).

This sequence belongs to the SecA family. As to quaternary structure, monomer and homodimer. Part of the essential Sec protein translocation apparatus which comprises SecA, SecYEG and auxiliary proteins SecDF. Other proteins may also be involved.

Its subcellular location is the cell membrane. The protein resides in the cytoplasm. The catalysed reaction is ATP + H2O + cellular proteinSide 1 = ADP + phosphate + cellular proteinSide 2.. Its function is as follows. Part of the Sec protein translocase complex. Interacts with the SecYEG preprotein conducting channel. Has a central role in coupling the hydrolysis of ATP to the transfer of proteins into and across the cell membrane, serving as an ATP-driven molecular motor driving the stepwise translocation of polypeptide chains across the membrane. This is Protein translocase subunit SecA 1 from Mycolicibacterium vanbaalenii (strain DSM 7251 / JCM 13017 / BCRC 16820 / KCTC 9966 / NRRL B-24157 / PYR-1) (Mycobacterium vanbaalenii).